A 399-amino-acid chain; its full sequence is Myb-related transcription factor, partner of profilin (399 aa).

Positions 12-84 (TTRLRKPRFS…EVQKRWNDFK (73 aa)) constitute a Myb-like domain. The Nuclear localization signal motif lies at 83 to 86 (FKRR). Disordered stretches follow at residues 87–108 (TKEK…AEDA), 127–261 (PGAG…PSLD), 297–332 (LLPG…PKVE), and 358–399 (APRS…WKSP). A compositionally biased stretch (low complexity) spans 127–136 (PGAGAGAEEP). Positions 137–149 (PAAPSSQPPPPSA) are enriched in pro residues. Over residues 156-170 (LSEDRREDRRADTSA) the composition is skewed to basic and acidic residues. Composition is skewed to pro residues over residues 219–252 (SPPP…PPPT), 305–329 (SLPP…PPAP), and 366–377 (PRPPPAPLPPHD). The span at 381–399 (HKRRKGFPTRKRRGRWKSP) shows a compositional bias: basic residues. Short sequence motifs (nuclear localization signal) lie at residues 382 to 385 (KRRK) and 390 to 393 (RKRR).

As to quaternary structure, interacts with PFN1. Homodimer and heterodimer with PFN1.

The protein resides in the nucleus. Transcriptional repressor; DNA-binding protein that specifically recognizes the core sequence 5'-YAAC[GT]G-3'. Dimerization with PFN1 reduces its DNA-binding capacity. This Homo sapiens (Human) protein is Myb-related transcription factor, partner of profilin (MYPOP).